A 206-amino-acid chain; its full sequence is Small ribosomal subunit protein uS4 (206 aa).

Residues 96–156 (GRLDNVVYRM…EKAKQQARIK (61 aa)) enclose the S4 RNA-binding domain.

This sequence belongs to the universal ribosomal protein uS4 family. As to quaternary structure, part of the 30S ribosomal subunit. Contacts protein S5. The interaction surface between S4 and S5 is involved in control of translational fidelity.

Its function is as follows. One of the primary rRNA binding proteins, it binds directly to 16S rRNA where it nucleates assembly of the body of the 30S subunit. Functionally, with S5 and S12 plays an important role in translational accuracy. The polypeptide is Small ribosomal subunit protein uS4 (Vibrio campbellii (strain ATCC BAA-1116)).